The following is a 152-amino-acid chain: Transcriptional regulator MraZ (152 aa).

2 SpoVT-AbrB domains span residues 5-52 (ASAI…PADE) and 81-124 (AHEI…DEAQ).

This sequence belongs to the MraZ family. In terms of assembly, forms oligomers.

It localises to the cytoplasm. The protein localises to the nucleoid. The sequence is that of Transcriptional regulator MraZ from Shewanella amazonensis (strain ATCC BAA-1098 / SB2B).